Reading from the N-terminus, the 757-residue chain is Elongation factor G, mitochondrial (757 aa).

The transit peptide at 1–39 directs the protein to the mitochondrion; it reads MLLVPRVPVVMQGKCGLLKISRPLQGSLSRGFHFSRAHR. The 282-residue stretch at 65–346 folds into the tr-type G domain; the sequence is QKLRNIGISA…AIVDYLPNPS (282 aa). Residues 74–81, 145–149, and 199–202 contribute to the GTP site; these read AHIDSGKT, DTPGH, and NKMD.

The protein belongs to the TRAFAC class translation factor GTPase superfamily. Classic translation factor GTPase family. EF-G/EF-2 subfamily.

It localises to the mitochondrion. It functions in the pathway protein biosynthesis; polypeptide chain elongation. Mitochondrial GTPase that catalyzes the GTP-dependent ribosomal translocation step during translation elongation. During this step, the ribosome changes from the pre-translocational (PRE) to the post-translocational (POST) state as the newly formed A-site-bound peptidyl-tRNA and P-site-bound deacylated tRNA move to the P and E sites, respectively. Catalyzes the coordinated movement of the two tRNA molecules, the mRNA and conformational changes in the ribosome. This Candida glabrata (strain ATCC 2001 / BCRC 20586 / JCM 3761 / NBRC 0622 / NRRL Y-65 / CBS 138) (Yeast) protein is Elongation factor G, mitochondrial.